A 67-amino-acid polypeptide reads, in one-letter code: MANIKAVFLICIVAFIAFHCVVAEPTAEDSVVVKRSLGGVISGAKKVAKVAIPIGKAVLPVVAKLVG.

The signal sequence occupies residues 1-23 (MANIKAVFLICIVAFIAFHCVVA). Positions 24-35 (EPTAEDSVVVKR) are excised as a propeptide.

Homomer of four to six subunits.

It is found in the secreted. Its function is as follows. Female-specific peptides with potent activity against Gram-positive and Gram-negative bacteria. They have as well hemolytic activity. The sequence is that of Ceratotoxin-C (CTXC1) from Ceratitis capitata (Mediterranean fruit fly).